A 992-amino-acid polypeptide reads, in one-letter code: MMNNGCDEVSPRSEIALLGSVETMLEKIYEKHNHRLPISVETRRKLSSISEELALETLRKVFNKPYLKTLDGLIMYFVKGTVTVDGSPRLSPGESPVQSPRTPAKKSCRASQDVSLDLETPSPKFMKREENGGSKYIPPLLALGELEFKKAFLLLSYIGGESLVEEVISGDQIRKWKDLPMVSYEAAVWNRLGQRYCSPKERRRPLEGDSGMTHYYQCHVATDGSYKFKGHLLENTGTHLHKVLGDDNVLTVKFDKVLGVETYCNDLYSTYKGIAKNGIMVGLRRYRFFVFKDGGKEEKKKDVSTKGVKCYFIRTDSTASIDMQNPYIFAGKSMHEARMHFMHVNTLSSLPNYMSRFSLILSKTKTLEVDMTGITFEQIDDIHCHDQDDKDVLDKNGKPCIHSDGTGYISEDLARMCPVNIFKGKSMRSNNIQSKNLNFEGQGPCGQEPPLLIQFRIFYNGYAVKGTFLTNKKLPPRTVQVRPSMIKVYEDRTLSNLSTFNSLEVVTTSNPPRKARLSRNLVALLSYGGVPNDFFLNILRNTLEESKTIFYSERAAFKAAINYGDDQYTADMILVGIPLDEPYLKDRLSYLLKTERNALKAGRFPIDESYYIMGTVDPTGELKENEICVILHSGQISGDVLVYRNPGLHFGDIHVLKATYVKALEDYVGNAKFAVFFPQKGPRSLGDEIAGGDFDGDMYFISRNPKLLEHFKPSEPWVSSSKPSKIYCGRKPSELSEEELEEELFKMFLKARFCKRDVIGMAADCWLGIMDPFLTLGDESAKEKYERKKNILKLIDIYYDALDAPKKGAKVDLPPDLEIKNFPHYMERDPKRDFRSTSILGLIFDTVDSHNAEEPPPSEISKLWYFEDEPVPKSHMDKFTSWYENYRSEMSQAMMETDKVKRNQLTNEVIQRYKQDFYGAAGFEDSNKSLEELYPQALALYNVVYDYAIQEGVAKCTFAWNVAGPVLCKFYLKKTKDKSVVASTSVLKKLLG.

The tract at residues 88–113 (PRLSPGESPVQSPRTPAKKSCRASQD) is disordered.

It belongs to the RdRP family.

The catalysed reaction is RNA(n) + a ribonucleoside 5'-triphosphate = RNA(n+1) + diphosphate. Probably involved in the RNA silencing pathway and required for the generation of small interfering RNAs (siRNAs). This is Probable RNA-dependent RNA polymerase 3 (RDR3) from Arabidopsis thaliana (Mouse-ear cress).